The chain runs to 492 residues: Cytochrome P450 monooxygenase MYCFIDRAFT_204672 (492 aa).

Asparagine 116 carries N-linked (GlcNAc...) asparagine glycosylation. The helical transmembrane segment at 269–293 threads the bilayer; it reads FLISMIFISAANGCVVSGAMLYSIA. N-linked (GlcNAc...) asparagine glycosylation is present at asparagine 335. Cysteine 430 contributes to the heme binding site.

It belongs to the cytochrome P450 family. The cofactor is heme.

The protein localises to the membrane. Its pathway is secondary metabolite biosynthesis. Functionally, cytochrome P450 monooxygenase; part of the gene cluster that mediates the biosynthesis of an emodin derivative that may be involved in black Sigatoka disease of banana. The pathway begins with the synthesis of atrochrysone thioester by the polyketide synthase PKS8-1. The atrochrysone carboxyl ACP thioesterase MYCFIDRAFT_190111 then breaks the thioester bond and releases the atrochrysone carboxylic acid from PKS8-1. The decarboxylase MYCFIDRAFT_34057 then catalyzes the concerted decarboxylation-elimination required to convert atochrysone carboxylic acid into emodin anthrone, which is further oxidized to emodin by the anthrone oxygenase MYCFIDRAFT_34418. The functions of the other tailoring enzymes as well as the final product of the cluster have still to be identified. The protein is Cytochrome P450 monooxygenase MYCFIDRAFT_204672 of Pseudocercospora fijiensis (strain CIRAD86) (Black leaf streak disease fungus).